Reading from the N-terminus, the 139-residue chain is ATP synthase epsilon chain (139 aa).

The protein belongs to the ATPase epsilon chain family. In terms of assembly, F-type ATPases have 2 components, CF(1) - the catalytic core - and CF(0) - the membrane proton channel. CF(1) has five subunits: alpha(3), beta(3), gamma(1), delta(1), epsilon(1). CF(0) has three main subunits: a, b and c.

The protein resides in the cell inner membrane. In terms of biological role, produces ATP from ADP in the presence of a proton gradient across the membrane. The sequence is that of ATP synthase epsilon chain from Shigella boydii serotype 18 (strain CDC 3083-94 / BS512).